Consider the following 428-residue polypeptide: BTB/POZ domain-containing protein KCTD16 (428 aa).

Residues 25 to 98 (EVVELNVGGQ…LRDRQVVLPD (74 aa)) form the BTB domain. Y112 carries the phosphotyrosine modification. Phosphoserine is present on residues S130, S137, S143, and S146.

Homopentamer; forms an open pentamer. In contrast to other BTB domain-containing proteins, does not interact with CUL3. Interacts as a tetramer with GABRB1 and GABRB2.

Its subcellular location is the presynaptic cell membrane. The protein localises to the postsynaptic cell membrane. Its function is as follows. Auxiliary subunit of GABA-B receptors that determine the pharmacology and kinetics of the receptor response. Increases agonist potency and markedly alter the G-protein signaling of the receptors by accelerating onset and promoting desensitization. This Homo sapiens (Human) protein is BTB/POZ domain-containing protein KCTD16 (KCTD16).